The following is a 2572-amino-acid chain: Zinc finger homeobox protein 2 (2572 aa).

2 disordered regions span residues 1–107 (MATL…GLPP) and 343–425 (LSPP…ADDY). The span at 8-36 (STTGTTPSPGHNAPSLPSDTFSSSTPSDP) shows a compositional bias: low complexity. Composition is skewed to polar residues over residues 44–53 (ASSTSENMRS) and 389–398 (LNQSSPTSKE). 2 C2H2-type zinc fingers span residues 453–476 (LKCPKCNWHYKYQQTLDVHMREKH) and 508–532 (YRCDVCNYSTTTKGNLSIHMQSDKH). 3 disordered regions span residues 537-566 (QGFQAGPGGQGSPPEASLPPSAGDKEPKTK), 608-655 (LPPG…LRPD), and 675-710 (RKFPTSAPGSLSPDAHLPPSQLLGSSSDSLPTSPPP). The segment covering 615–628 (PGPPPPPGATPTSP) has biased composition (pro residues). Low complexity predominate over residues 696–705 (LLGSSSDSLP). C2H2-type zinc fingers lie at residues 821–845 (LRCNICDFESNSKEKMQLHARGAAH) and 870–894 (YHCLLCAWETPSRLAVLQHLRTPAH). Residues 929-974 (QLRTPGKAPVTPLAEPPTPEKDAQNKTEQLASEETENKTGPSRDSA) form a disordered region. Over residues 954–974 (KTEQLASEETENKTGPSRDSA) the composition is skewed to polar residues. Residues 1009–1032 (YRCPLCQEQLVGRPALHFHLSHLH) form a C2H2-type 5 zinc finger. The tract at residues 1061-1171 (PTLSPLDNGQ…PAPADSRHPL (111 aa)) is disordered. Residues 1120-1132 (GQPPSPAPSPVPE) are compositionally biased toward pro residues. 2 C2H2-type zinc fingers span residues 1191–1217 (YKCTVCKESFTQKNILLVHYNSVSHLH) and 1248–1272 (FKCTVCRVSYNQSSTLEIHMRSVLH). Disordered stretches follow at residues 1269–1325 (SVLH…FLSP), 1389–1408 (LPAATPPPPPQPPKAELAER), and 1415–1434 (MAKEGNEAGPSSPPDPLPNE). The span at 1279–1311 (TKTDSKIEGPERSQEEPKEGETEGEVGTEKKGP) shows a compositional bias: basic and acidic residues. Over residues 1392–1401 (ATPPPPPQPP) the composition is skewed to pro residues. The segment at 1480–1503 (LACGACGKLFSNMLILKTHEEHVH) adopts a C2H2-type 8 zinc-finger fold. The disordered stretch occupies residues 1528–1591 (PPLAEPPKPP…SSRGNLPPLV (64 aa)). Residues 1595–1654 (RRFSRTKFTEFQTQALQSFFETSAYPKDGEVERLASLLGLASRVVVVWFQNARQKARKNA) constitute a DNA-binding region (homeobox 1). Residues 1670–1696 (SGCRRCHATFSCVFELVRHLKKCYDDQ) form a C2H2-type 9; degenerate zinc finger. Residues 1696–1724 (QTLEEEEEEAERGEEEEEVEEEEVEEEQG) show a composition bias toward acidic residues. Disordered regions lie at residues 1696-1769 (QTLE…SPAH), 1820-1860 (AATS…DKRL), 1912-2065 (ERKG…GMGQ), 2268-2327 (VQTA…NDAL), and 2398-2431 (NALLQPPPQPPEPTATAPPKPPELPAPGEGEAGE). The segment covering 1728–1738 (PAGPEGPLPEP) has biased composition (pro residues). A C2H2-type 10 zinc finger spans residues 1769-1791 (HTCDQCAISFSSQDLLTSHRRLH). The segment at residues 1857–1916 (DKRLRTTILPEQLEILYRWYMQDSNPTRKMLDCISEEVGLKKRVVQVWFQNTRARERKGQ) is a DNA-binding region (homeobox 2). Over residues 1925 to 1939 (PSPAVKPPATATPAS) the composition is skewed to low complexity. Residues 1949-1963 (KVDDGTGREAPKREA) show a composition bias toward basic and acidic residues. A compositionally biased stretch (pro residues) spans 1991-2004 (TPEPPLPLLPPPPP). Residues 2017-2044 (SPESEACSLSAGDLSDSSASSLAEPESP) show a composition bias toward low complexity. Residues 2045 to 2061 (GAGGTSGGPGGGTGVPD) are compositionally biased toward gly residues. Positions 2065–2124 (QRRYRTQMSSLQLKIMKACYEAYRTPTMQECEVLGEEIGLPKRVIQVWFQNARAKEKKAK) form a DNA-binding region, homeobox 3. Residues 2284–2293 (DQTNTSTAGT) are compositionally biased toward polar residues. Residues 2305-2315 (LGDKVSSERKP) are compositionally biased toward basic and acidic residues. A compositionally biased stretch (pro residues) spans 2402–2422 (QPPPQPPEPTATAPPKPPELP). A C2H2-type 11; degenerate zinc finger spans residues 2451–2471 (YLCRQCKMAFDGEAPATAHQR). A C2H2-type 12 zinc finger spans residues 2495–2519 (YHCLACEVLLSGREALASHLRSSAH). Positions 2551–2572 (EARLPHTDSNPKTTTTSTLLAL) are disordered. Residues 2563–2572 (TTTTSTLLAL) are compositionally biased toward low complexity.

The protein resides in the nucleus. In terms of biological role, transcriptional regulator that is critical for the regulation of pain perception and processing of noxious stimuli. This is Zinc finger homeobox protein 2 (ZFHX2) from Homo sapiens (Human).